The primary structure comprises 290 residues: 4-hydroxybenzoate octaprenyltransferase (290 aa).

9 helical membrane passes run 20-40 (IGIL…AEGV), 43-63 (LDIL…GCVV), 92-112 (EALL…QPLN), 114-131 (LTIE…SYPF), 135-155 (FFAM…PMAF), 160-180 (GEVP…VIAY), 209-229 (VVGV…IGLL), 231-251 (NLGV…LYQY), and 266-286 (FLHN…DYLV).

This sequence belongs to the UbiA prenyltransferase family. Requires Mg(2+) as cofactor.

Its subcellular location is the cell inner membrane. It carries out the reaction all-trans-octaprenyl diphosphate + 4-hydroxybenzoate = 4-hydroxy-3-(all-trans-octaprenyl)benzoate + diphosphate. Its pathway is cofactor biosynthesis; ubiquinone biosynthesis. Catalyzes the prenylation of para-hydroxybenzoate (PHB) with an all-trans polyprenyl group. Mediates the second step in the final reaction sequence of ubiquinone-8 (UQ-8) biosynthesis, which is the condensation of the polyisoprenoid side chain with PHB, generating the first membrane-bound Q intermediate 3-octaprenyl-4-hydroxybenzoate. This Nitrosospira multiformis (strain ATCC 25196 / NCIMB 11849 / C 71) protein is 4-hydroxybenzoate octaprenyltransferase.